Consider the following 121-residue polypeptide: uncharacterized protein (121 aa).

3 helical membrane passes run 1–21, 55–75, and 92–112; these read MILW…IMPV, LKYI…FCSI, and LFFK…IHFL.

Its subcellular location is the membrane. This is an uncharacterized protein from Saccharomyces cerevisiae (strain ATCC 204508 / S288c) (Baker's yeast).